Here is a 2147-residue protein sequence, read N- to C-terminus: Probable serine/threonine-protein kinase roco6 (2147 aa).

Topologically, residues 1 to 1055 (MNSIHKQHYT…LDHSRVEFNR (1055 aa)) are extracellular. LRR repeat units lie at residues 69 to 89 (DMKYLDLSKRMIYSLELMMIP), 101 to 122 (SISILNLNDNLLGEIPESLKQL), 124 to 145 (QLISLSIRGNHILEIPLWFPEE), 148 to 169 (LLRKLDVSHNAISSVPNTFNKF), 171 to 192 (ILEDLNLSNNYISYIHPSLFPE), 193 to 214 (GIMRLNLSNNLFREVELPPWFE), 215 to 236 (SLLTLDISGNKLKHLGNLPFHL), 237 to 256 (VRVSIDDNHLESIDHKVILR), 306 to 328 (HLTHLDLSGNCISVLPPELANLT), 329 to 350 (ELVRLDLSFNILTTLPLYIVSY), and 352 to 372 (RLEHLDLQGTLDTLVSPPRRI). The 361-residue stretch at 390-750 (QGEPSYRVKL…DLLKKTVVEL (361 aa)) folds into the Roc domain. The segment at 390 to 750 (QGEPSYRVKL…DLLKKTVVEL (361 aa)) is small GTPase-like. GTP is bound at residue 403-410 (GQENVGKT). Disordered stretches follow at residues 491 to 582 (NSNG…VGTN) and 602 to 621 (SNLSIGGSNGNNNNNSGGSG). Composition is skewed to low complexity over residues 492-512 (SNGVNSNSQININSSSGNIHS), 519-531 (NVNSSGGIHSNNS), 539-568 (NSFLNNTNSNGTNNNSSNLNINTNSNNVNS), and 602-617 (SNLSIGGSNGNNNNNS). GTP contacts are provided by residues 634-638 (DCAGQ) and 691-694 (THLD). The 135-residue stretch at 758–892 (PELYLKLEKL…RFELMFPLDS (135 aa)) folds into the COR domain. Composition is skewed to low complexity over residues 905-941 (GNSYVNNNNNNNNNSNNNNNGSNKSSPFKTTPSSPST) and 960-977 (SGNNSSSKNSTSTKRSIS). Positions 905–995 (GNSYVNNNNN…NSDLDLIGGG (91 aa)) are disordered. The stretch at 1051-1098 (VEFNRWIQLSFAPAGLFSRLLIRLLISKEFDMKPILYWRNGVVVESQS) is one WD 1 repeat. Residues 1056-1076 (WIQLSFAPAGLFSRLLIRLLI) form a helical membrane-spanning segment. Residues 1077 to 2147 (SKEFDMKPIL…CGTNNVCIWS (1071 aa)) are Cytoplasmic-facing. 3 LRR repeats span residues 1237–1263 (ILSIKPASFGNNQIQFEVRVPPSPPPP), 1274–1297 (DDNITTTTLAVNNIKVLESGGSQP), and 1325–1348 (ESSLIQVEFDHNNQTLVISGTYKY). The 272-residue stretch at 1356–1627 (FESPKLIGRG…KIVKRIKQII (272 aa)) folds into the Protein kinase domain. ATP contacts are provided by residues 1362–1370 (IGRGASGKI) and K1383. D1481 (proton acceptor) is an active-site residue. The segment at 1653–1699 (ADSQPFHYHQQQQPSLNSTNQLQQQQYSSVLTSPRSNLSDSSNSSQN) is disordered. The span at 1662–1699 (QQQQPSLNSTNQLQQQQYSSVLTSPRSNLSDSSNSSQN) shows a compositional bias: low complexity. WD repeat units lie at residues 1735–1774 (QPEAKVNQLVWEVNSRRVWGGCESGEIIVWNAENGNQIFR) and 1778–1820 (LHPG…LDDQ). One can recognise a PH domain in the interval 1821-1923 (SGTKSDFITK…WLTAINRVIN (103 aa)). The WD 4 repeat unit spans residues 2031 to 2068 (HYSKPITSMALVEKNVWISCEDESLSVWDGDTGSFIRK).

It belongs to the protein kinase superfamily. TKL Ser/Thr protein kinase family. ROCO subfamily.

The protein localises to the membrane. It carries out the reaction L-seryl-[protein] + ATP = O-phospho-L-seryl-[protein] + ADP + H(+). The enzyme catalyses L-threonyl-[protein] + ATP = O-phospho-L-threonyl-[protein] + ADP + H(+). Functionally, may act as a serine/threonine-protein kinase and guanine-nucleotide releasing factor. This is Probable serine/threonine-protein kinase roco6 (roco6) from Dictyostelium discoideum (Social amoeba).